The primary structure comprises 205 residues: Large ribosomal subunit protein uL4 (205 aa).

A disordered region spans residues 47-70 (TRAQKSRAEVSGGGKKPFRQKGTG).

The protein belongs to the universal ribosomal protein uL4 family. In terms of assembly, part of the 50S ribosomal subunit.

One of the primary rRNA binding proteins, this protein initially binds near the 5'-end of the 23S rRNA. It is important during the early stages of 50S assembly. It makes multiple contacts with different domains of the 23S rRNA in the assembled 50S subunit and ribosome. Functionally, forms part of the polypeptide exit tunnel. The sequence is that of Large ribosomal subunit protein uL4 from Acinetobacter baylyi (strain ATCC 33305 / BD413 / ADP1).